Consider the following 209-residue polypeptide: Ribosomal RNA large subunit methyltransferase E (209 aa).

Residues Gly-63, Trp-65, Asp-83, Asp-99, and Asp-124 each contribute to the S-adenosyl-L-methionine site. Lys-164 acts as the Proton acceptor in catalysis.

The protein belongs to the class I-like SAM-binding methyltransferase superfamily. RNA methyltransferase RlmE family.

Its subcellular location is the cytoplasm. The catalysed reaction is uridine(2552) in 23S rRNA + S-adenosyl-L-methionine = 2'-O-methyluridine(2552) in 23S rRNA + S-adenosyl-L-homocysteine + H(+). In terms of biological role, specifically methylates the uridine in position 2552 of 23S rRNA at the 2'-O position of the ribose in the fully assembled 50S ribosomal subunit. This Pectobacterium atrosepticum (strain SCRI 1043 / ATCC BAA-672) (Erwinia carotovora subsp. atroseptica) protein is Ribosomal RNA large subunit methyltransferase E.